The primary structure comprises 275 residues: 4-diphosphocytidyl-2-C-methyl-D-erythritol kinase (275 aa).

Residue lysine 14 is part of the active site. 98–108 (PMGAGLGGGSS) lines the ATP pocket. Aspartate 140 is a catalytic residue.

Belongs to the GHMP kinase family. IspE subfamily.

It carries out the reaction 4-CDP-2-C-methyl-D-erythritol + ATP = 4-CDP-2-C-methyl-D-erythritol 2-phosphate + ADP + H(+). Its pathway is isoprenoid biosynthesis; isopentenyl diphosphate biosynthesis via DXP pathway; isopentenyl diphosphate from 1-deoxy-D-xylulose 5-phosphate: step 3/6. Functionally, catalyzes the phosphorylation of the position 2 hydroxy group of 4-diphosphocytidyl-2C-methyl-D-erythritol. This is 4-diphosphocytidyl-2-C-methyl-D-erythritol kinase from Francisella tularensis subsp. holarctica (strain FTNF002-00 / FTA).